The following is a 227-amino-acid chain: Cytochrome c oxidase subunit 2 (227 aa).

Residues 1-26 (MATWSNLSIQDGASPLMEQLSFFHDD) are Mitochondrial intermembrane-facing. The chain crosses the membrane as a helical span at residues 27-48 (HTMVVLLITVIVGYALSYMLFN). Topologically, residues 49–62 (AYTNRNMLHGHLIE) are mitochondrial matrix. Residues 63–82 (TIWTALPAITLIFIALPSLR) traverse the membrane as a helical segment. Topologically, residues 83–227 (LLYLLDDSVD…LFIKWLSKMI (145 aa)) are mitochondrial intermembrane. Positions 161, 196, 198, 200, 204, and 207 each coordinate Cu cation. Glu-198 is a binding site for Mg(2+).

The protein belongs to the cytochrome c oxidase subunit 2 family. Component of the cytochrome c oxidase (complex IV, CIV), a multisubunit enzyme composed of a catalytic core of 3 subunits and several supernumerary subunits. The complex exists as a monomer or a dimer and forms supercomplexes (SCs) in the inner mitochondrial membrane with ubiquinol-cytochrome c oxidoreductase (cytochrome b-c1 complex, complex III, CIII). It depends on Cu cation as a cofactor.

It localises to the mitochondrion inner membrane. The enzyme catalyses 4 Fe(II)-[cytochrome c] + O2 + 8 H(+)(in) = 4 Fe(III)-[cytochrome c] + 2 H2O + 4 H(+)(out). In terms of biological role, component of the cytochrome c oxidase, the last enzyme in the mitochondrial electron transport chain which drives oxidative phosphorylation. The respiratory chain contains 3 multisubunit complexes succinate dehydrogenase (complex II, CII), ubiquinol-cytochrome c oxidoreductase (cytochrome b-c1 complex, complex III, CIII) and cytochrome c oxidase (complex IV, CIV), that cooperate to transfer electrons derived from NADH and succinate to molecular oxygen, creating an electrochemical gradient over the inner membrane that drives transmembrane transport and the ATP synthase. Cytochrome c oxidase is the component of the respiratory chain that catalyzes the reduction of oxygen to water. Electrons originating from reduced cytochrome c in the intermembrane space (IMS) are transferred via the dinuclear copper A center (CU(A)) of subunit 2 and heme A of subunit 1 to the active site in subunit 1, a binuclear center (BNC) formed by heme A3 and copper B (CU(B)). The BNC reduces molecular oxygen to 2 water molecules using 4 electrons from cytochrome c in the IMS and 4 protons from the mitochondrial matrix. This is Cytochrome c oxidase subunit 2 (COII) from Schistocerca gregaria (Desert locust).